An 817-amino-acid polypeptide reads, in one-letter code: Putative ATP-dependent RNA helicase R350 (817 aa).

Positions 1–29 (MNRRNRSNDLNPEPSIENPNNQIAEEFPG) are disordered. The segment covering 17–29 (ENPNNQIAEEFPG) has biased composition (polar residues). The Helicase ATP-binding domain maps to 93-271 (LNPQGPYTSI…ALMFNLLRPG (179 aa)). 106 to 113 (HGLGSGKT) contributes to the ATP binding site. Positions 206-209 (DEAH) match the DEAH box motif. Positions 495–661 (LAIAFMTYIS…STDEYVEDQA (167 aa)) constitute a Helicase C-terminal domain.

It belongs to the DEAD box helicase family. DEAH subfamily.

The protein localises to the virion. It catalyses the reaction ATP + H2O = ADP + phosphate + H(+). This Acanthamoeba polyphaga mimivirus (APMV) protein is Putative ATP-dependent RNA helicase R350.